The sequence spans 2068 residues: Lipoxygenase homology domain-containing protein 1 (2068 aa).

PLAT domains are found at residues 43–160, 172–287, 296–412, 425–540, 553–673, 684–803, 814–934, 970–1088, 1101–1226, 1255–1373, 1422–1540, 1553–1668, 1680–1798, 1811–1932, and 1949–2065; these read KVYE…RDLL, NKYE…RDIL, ITYI…RQLY, YPWS…REMT, ARYR…RELL, FRYH…VELY, VHYE…RELL, TTFS…RDLF, VPYE…RELV, VLYS…RLFY, IPYY…RVFD, VLYE…CEIC, TSYT…RDFA, TTYE…VFEV, and VKYE…RELF.

As to expression, expressed in the inner ear, specifically in hair cells. Higher expression is detected in the cochlea.

The protein resides in the cell projection. The protein localises to the stereocilium. Required for normal function of hair cells in the inner ear. The polypeptide is Lipoxygenase homology domain-containing protein 1 (Loxhd1) (Mus musculus (Mouse)).